Consider the following 103-residue polypeptide: Small ribosomal subunit protein uS10 (103 aa).

Belongs to the universal ribosomal protein uS10 family. As to quaternary structure, part of the 30S ribosomal subunit.

Involved in the binding of tRNA to the ribosomes. In Paraburkholderia xenovorans (strain LB400), this protein is Small ribosomal subunit protein uS10.